Consider the following 154-residue polypeptide: Myoglobin (154 aa).

A Globin domain is found at 2–148 (GLSDGEWQLV…FRNDIAAKYK (147 aa)). At Ser-4 the chain carries Phosphoserine. Residue His-65 participates in nitrite binding. His-65 lines the O2 pocket. Phosphothreonine is present on residues Thr-68 and Thr-75. A heme b-binding site is contributed by His-94. Ser-121 carries the phosphoserine modification.

It belongs to the globin family. As to quaternary structure, monomeric.

Its subcellular location is the cytoplasm. It localises to the sarcoplasm. The enzyme catalyses Fe(III)-heme b-[protein] + nitric oxide + H2O = Fe(II)-heme b-[protein] + nitrite + 2 H(+). The catalysed reaction is H2O2 + AH2 = A + 2 H2O. Monomeric heme protein which primary function is to store oxygen and facilitate its diffusion within muscle tissues. Reversibly binds oxygen through a pentacoordinated heme iron and enables its timely and efficient release as needed during periods of heightened demand. Depending on the oxidative conditions of tissues and cells, and in addition to its ability to bind oxygen, it also has a nitrite reductase activity whereby it regulates the production of bioactive nitric oxide. Under stress conditions, like hypoxia and anoxia, it also protects cells against reactive oxygen species thanks to its pseudoperoxidase activity. In Mus musculus (Mouse), this protein is Myoglobin.